We begin with the raw amino-acid sequence, 449 residues long: 8-oxoguanine deaminase (449 aa).

The Zn(2+) site is built by His-64 and His-66. Gln-69 serves as a coordination point for substrate. His-232 contributes to the Zn(2+) binding site. 2 residues coordinate substrate: Glu-235 and His-269. Zn(2+) contacts are provided by His-269 and Asp-320.

The protein belongs to the metallo-dependent hydrolases superfamily. ATZ/TRZ family. As to quaternary structure, homodimer. Zn(2+) is required as a cofactor.

It carries out the reaction 8-oxoguanine + H2O + H(+) = urate + NH4(+). The protein operates within purine metabolism. Its function is as follows. Specifically deaminates 8-Oxoguanine (8-oxoG) to uric acid. 8-oxoG is formed via the oxidation of guanine within DNA by reactive oxygen species and leads, if uncorrected, to the incorporation of 8-oxoG:A mismatches and eventually to G:C to T:A transversions. The chain is 8-oxoguanine deaminase from Pseudomonas aeruginosa (strain ATCC 15692 / DSM 22644 / CIP 104116 / JCM 14847 / LMG 12228 / 1C / PRS 101 / PAO1).